Consider the following 505-residue polypeptide: Glycerol kinase (505 aa).

Thr-14 is an ADP binding site. Positions 14, 15, and 16 each coordinate ATP. A sn-glycerol 3-phosphate-binding site is contributed by Thr-14. Arg-18 is a binding site for ADP. Sn-glycerol 3-phosphate contacts are provided by Arg-84, Glu-85, Tyr-136, and Asp-246. Glycerol is bound by residues Arg-84, Glu-85, Tyr-136, Asp-246, and Gln-247. Thr-268 and Gly-311 together coordinate ADP. 4 residues coordinate ATP: Thr-268, Gly-311, Gln-315, and Gly-412. ADP contacts are provided by Gly-412 and Asn-416.

This sequence belongs to the FGGY kinase family.

It carries out the reaction glycerol + ATP = sn-glycerol 3-phosphate + ADP + H(+). It functions in the pathway polyol metabolism; glycerol degradation via glycerol kinase pathway; sn-glycerol 3-phosphate from glycerol: step 1/1. With respect to regulation, inhibited by fructose 1,6-bisphosphate (FBP). Functionally, key enzyme in the regulation of glycerol uptake and metabolism. Catalyzes the phosphorylation of glycerol to yield sn-glycerol 3-phosphate. The protein is Glycerol kinase of Vibrio campbellii (strain ATCC BAA-1116).